The primary structure comprises 480 residues: RuvB-like helicase 2 (480 aa).

76–83 (GPPSTGKT) contacts ATP.

The protein belongs to the RuvB family. As to quaternary structure, may form heterododecamers with RVB1. Component of the SWR1 chromatin remodeling complex, the INO80 chromatin remodeling complex, and of the R2TP complex.

Its subcellular location is the nucleus. The catalysed reaction is ATP + H2O = ADP + phosphate + H(+). In terms of biological role, DNA helicase which participates in several chromatin remodeling complexes, including the SWR1 and the INO80 complexes. The SWR1 complex mediates the ATP-dependent exchange of histone H2A for the H2A variant HZT1 leading to transcriptional regulation of selected genes by chromatin remodeling. The INO80 complex remodels chromatin by shifting nucleosomes and is involved in DNA repair. Also involved in pre-rRNA processing. This chain is RuvB-like helicase 2 (RVB2), found in Debaryomyces hansenii (strain ATCC 36239 / CBS 767 / BCRC 21394 / JCM 1990 / NBRC 0083 / IGC 2968) (Yeast).